Consider the following 102-residue polypeptide: Small ribosomal subunit protein uS10 (102 aa).

Belongs to the universal ribosomal protein uS10 family. Part of the 30S ribosomal subunit.

Its function is as follows. Involved in the binding of tRNA to the ribosomes. The sequence is that of Small ribosomal subunit protein uS10 from Salinispora tropica (strain ATCC BAA-916 / DSM 44818 / JCM 13857 / NBRC 105044 / CNB-440).